A 470-amino-acid chain; its full sequence is Glutamate--tRNA ligase (470 aa).

The 'HIGH' region motif lies at 9-19 (PSPTGFLHVGG). The short motif at 236–240 (KLSKR) is the 'KMSKS' region element. Lysine 239 contacts ATP.

This sequence belongs to the class-I aminoacyl-tRNA synthetase family. Glutamate--tRNA ligase type 1 subfamily. Monomer.

The protein localises to the cytoplasm. It catalyses the reaction tRNA(Glu) + L-glutamate + ATP = L-glutamyl-tRNA(Glu) + AMP + diphosphate. In terms of biological role, catalyzes the attachment of glutamate to tRNA(Glu) in a two-step reaction: glutamate is first activated by ATP to form Glu-AMP and then transferred to the acceptor end of tRNA(Glu). The chain is Glutamate--tRNA ligase from Psychromonas ingrahamii (strain DSM 17664 / CCUG 51855 / 37).